We begin with the raw amino-acid sequence, 66 residues long: Large ribosomal subunit protein bL35 (66 aa).

The protein belongs to the bacterial ribosomal protein bL35 family. As to quaternary structure, part of the 50S ribosomal subunit. Contacts proteins L15 and L33.

Binds the 23S rRNA. The sequence is that of Large ribosomal subunit protein bL35 (rpmI) from Deinococcus radiodurans (strain ATCC 13939 / DSM 20539 / JCM 16871 / CCUG 27074 / LMG 4051 / NBRC 15346 / NCIMB 9279 / VKM B-1422 / R1).